Here is a 211-residue protein sequence, read N- to C-terminus: Histone H1t (211 aa).

N-acetylalanine is present on Ala-1. Positions 1 to 16 are enriched in low complexity; sequence AETAPAAPADSVPASV. The interval 1-42 is disordered; the sequence is AETAPAAPADSVPASVEKPPAKKRGKKPVGLTGTSRKAPSAS. The segment covering 32 to 42 has biased composition (polar residues); it reads TGTSRKAPSAS. The 74-residue stretch at 39 to 112 folds into the H15 domain; that stretch reads PSASVSKLIT…GASGSFKLSK (74 aa). A Citrulline modification is found at Arg-57. The interval 101 to 211 is disordered; it reads GTGASGSFKL…TNPRKATNRK (111 aa). A compositionally biased stretch (basic residues) spans 121–135; sequence GKVKKPAAAKTKKLV. The residue at position 142 (Ser-142) is a Phosphoserine. Residues 147 to 156 show a composition bias toward basic residues; the sequence is KANKRAKKSR. A Phosphothreonine modification is found at Thr-158. Phosphoserine is present on residues Ser-166 and Ser-181. Over residues 176–189 the composition is skewed to basic residues; it reads KQQRKSPAKARAAK.

This sequence belongs to the histone H1/H5 family. Post-translationally, phosphorylated in early spermatids. In terms of processing, citrullination at Arg-57 (H1R54ci) by PADI4 takes place within the DNA-binding site of H1 and results in its displacement from chromatin and global chromatin decondensation, thereby promoting pluripotency and stem cell maintenance. Testis-specific.

It localises to the nucleus. The protein localises to the chromosome. Its function is as follows. Testis-specific histone H1 that forms less compacted chromatin compared to other H1 histone subtypes. Formation of more relaxed chromatin may be required to promote chromatin architecture required for proper chromosome regulation during meiosis, such as homologous recombination. Histones H1 act as linkers that bind to nucleosomes and compact polynucleosomes into a higher-order chromatin configuration. The protein is Histone H1t of Sus scrofa (Pig).